The chain runs to 208 residues: Small ribosomal subunit protein uS4 (208 aa).

An S4 RNA-binding domain is found at 97-158; the sequence is TRLDNVIYRM…RAQKYLCVQE (62 aa).

This sequence belongs to the universal ribosomal protein uS4 family. Part of the 30S ribosomal subunit. Contacts protein S5. The interaction surface between S4 and S5 is involved in control of translational fidelity.

Functionally, one of the primary rRNA binding proteins, it binds directly to 16S rRNA where it nucleates assembly of the body of the 30S subunit. Its function is as follows. With S5 and S12 plays an important role in translational accuracy. In Xylella fastidiosa (strain M23), this protein is Small ribosomal subunit protein uS4.